The chain runs to 94 residues: Large ribosomal subunit protein bL25 (94 aa).

Belongs to the bacterial ribosomal protein bL25 family. In terms of assembly, part of the 50S ribosomal subunit; part of the 5S rRNA/L5/L18/L25 subcomplex. Contacts the 5S rRNA. Binds to the 5S rRNA independently of L5 and L18.

Its function is as follows. This is one of the proteins that binds to the 5S RNA in the ribosome where it forms part of the central protuberance. The protein is Large ribosomal subunit protein bL25 of Proteus mirabilis (strain HI4320).